Here is a 300-residue protein sequence, read N- to C-terminus: Protoheme IX farnesyltransferase (300 aa).

9 helical membrane passes run 24-44 (VTQL…PGMV), 46-66 (WHVL…AFAI), 94-114 (PQIL…LYTF), 118-138 (LTMW…TLLL), 146-166 (IVIG…AVTG), 172-192 (AWIL…VLAL), 217-237 (LHIL…FISG), 239-259 (SGAV…AYAW), and 278-298 (IVYL…RPLL).

This sequence belongs to the UbiA prenyltransferase family. Protoheme IX farnesyltransferase subfamily.

It is found in the cell inner membrane. It catalyses the reaction heme b + (2E,6E)-farnesyl diphosphate + H2O = Fe(II)-heme o + diphosphate. It participates in porphyrin-containing compound metabolism; heme O biosynthesis; heme O from protoheme: step 1/1. Converts heme B (protoheme IX) to heme O by substitution of the vinyl group on carbon 2 of heme B porphyrin ring with a hydroxyethyl farnesyl side group. In Burkholderia lata (strain ATCC 17760 / DSM 23089 / LMG 22485 / NCIMB 9086 / R18194 / 383), this protein is Protoheme IX farnesyltransferase.